The chain runs to 38 residues: Odorant-binding protein 2 (38 aa).

Belongs to the calycin superfamily. Lipocalin family. As to expression, nasal mucosa.

Its subcellular location is the secreted. It localises to the extracellular space. Functionally, this soluble protein may play a specific role in odor discrimination and perception. This Hystrix cristata (North African crested porcupine) protein is Odorant-binding protein 2.